The chain runs to 100 residues: NAD(P)H-quinone oxidoreductase subunit 4L, chloroplastic (100 aa).

3 helical membrane-spanning segments follow: residues 1 to 21, 27 to 47, and 61 to 81; these read MIENILIIGAFLFCIGTYGLI, IKVLMCLELMFNSVNINLVAF, and FAVFIIAIAAAEAAIGLAIVF.

Belongs to the complex I subunit 4L family. In terms of assembly, NDH is composed of at least 16 different subunits, 5 of which are encoded in the nucleus.

It localises to the plastid. It is found in the chloroplast thylakoid membrane. The catalysed reaction is a plastoquinone + NADH + (n+1) H(+)(in) = a plastoquinol + NAD(+) + n H(+)(out). The enzyme catalyses a plastoquinone + NADPH + (n+1) H(+)(in) = a plastoquinol + NADP(+) + n H(+)(out). Its function is as follows. NDH shuttles electrons from NAD(P)H:plastoquinone, via FMN and iron-sulfur (Fe-S) centers, to quinones in the photosynthetic chain and possibly in a chloroplast respiratory chain. The immediate electron acceptor for the enzyme in this species is believed to be plastoquinone. Couples the redox reaction to proton translocation, and thus conserves the redox energy in a proton gradient. The chain is NAD(P)H-quinone oxidoreductase subunit 4L, chloroplastic from Chaetosphaeridium globosum (Charophycean green alga).